The primary structure comprises 490 residues: Allantoin permease (490 aa).

12 consecutive transmembrane segments (helical) span residues 36 to 56 (IWMG…LIAI), 60 to 80 (PWQV…ALAL), 116 to 136 (AIMW…ILLL), 151 to 171 (ILGI…IHLL), 190 to 210 (LVYL…GGLG), 225 to 245 (TFWP…TLIL), 265 to 285 (FYGL…VTSG), 308 to 328 (YVIV…NVAA), 350 to 370 (GSFI…MESA), 373 to 393 (VYAF…VMMA), 425 to 445 (AFAA…VPVL), and 448 to 468 (LYDI…IVLM).

The protein belongs to the purine-cytosine permease (2.A.39) family.

It localises to the cell membrane. The catalysed reaction is (S)-allantoin(in) + H(+)(in) = (S)-allantoin(out) + H(+)(out). Functionally, uptake of allantoin into the cell. Allantoin uptake is not dependent on sodium, and PucI is likely to be a proton-coupled symporter. Shows highest recognition for binding of allantoin, good recognition for binding of hydantoin, L-5-benzylhydantoin and 5-hydroxyhydantoin, and to a lesser extent for a range of nucleobases and nucleosides. This Bacillus subtilis (strain 168) protein is Allantoin permease.